We begin with the raw amino-acid sequence, 81 residues long: Delta-conotoxin PVIA (81 aa).

The first 22 residues, 1–22 (MKLTCVMIVAVLFLTAWTFVTA), serve as a signal peptide directing secretion. A propeptide spanning residues 23-49 (DDSKNGLENHFWKARDEMKNREASKLD) is cleaved from the precursor. 3 disulfide bridges follow: cysteine 54-cysteine 69, cysteine 61-cysteine 73, and cysteine 68-cysteine 78. 4-hydroxyproline occurs at positions 57 and 65. Glycine amide; in form delta-conotoxin PVIA is present on glycine 80.

In terms of processing, the difference between delta-conotoxin PVIA and [deamido]-delta-conotoxin PVIA lies in the state of amidation of Gly-80. In terms of tissue distribution, expressed by the venom duct.

It is found in the secreted. Functionally, delta-conotoxins bind to site 6 of voltage-gated sodium channels (Nav) and inhibit the inactivation process. This toxin shows weak effects on rNav1.2/SCN2A (EC(50)=2.9 uM), rNav1.4/SCN4A (EC(50)=5.2 uM), hNav1.7/SCN9A (EC(50)=1.9 uM) and rNav1.7/SCN9A (EC(50)=6.4 uM). In vivo, this toxin shows different effects. In mice, injection of this toxin causes hyperactivity, rapid running, limb extension, and death. In fish, the peptide elicites spurts of rapid swimming, with twisted motions, quivering fins and the lockjaw extended mouth syndrome. Rigid paralysis and death are observed at higher doses. In mollusks, this peptide is inactive. Injection of this peptide together with the kappa-conotoxin PVIIA causes the sudden tetanus of prey (STOP) syndrome, which is a single, lethal 'fin-pop' in envenomed fish. The polypeptide is Delta-conotoxin PVIA (Conus purpurascens (Purple cone)).